We begin with the raw amino-acid sequence, 283 residues long: Lectin-like protein At1g53080 (283 aa).

The N-terminal stretch at 1–23 is a signal peptide; it reads MQIHKLCIFVLFISLLSSKTISA. A legume-lectin like region spans residues 24 to 277; the sequence is VKFNFNRFDG…RHDIWSWSFE (254 aa). N-linked (GlcNAc...) asparagine glycans are attached at residues Asn84 and Asn138. Ser247 is subject to Phosphoserine.

Belongs to the leguminous lectin family.

Its subcellular location is the secreted. The protein localises to the extracellular space. The protein resides in the apoplast. The chain is Lectin-like protein At1g53080 from Arabidopsis thaliana (Mouse-ear cress).